The chain runs to 1453 residues: NK-tumor recognition protein (1453 aa).

In terms of domain architecture, PPIase cyclophilin-type spans 10 to 175; sequence HFDIEINREP…ADVRVIDCGV (166 aa). Residues 187-625 are disordered; that stretch reads KKRKKPTCSE…RWKPGQKPWK (439 aa). Residues 195-213 are compositionally biased toward low complexity; sequence SEGSDSSSRSSSSSESSSE. Residues 221–240 are compositionally biased toward basic residues; sequence IRRRRHKRRPKVRHAKKRRK. Basic and acidic residues predominate over residues 259-286; the sequence is YSERSDVNEKRSVDSNTKREKPVVRPEE. Lysine 323 is covalently cross-linked (Glycyl lysine isopeptide (Lys-Gly) (interchain with G-Cter in SUMO2)). Residues 329-348 show a composition bias toward basic residues; the sequence is SGRKIKGRGTIRYHTPPRSR. Phosphoserine occurs at positions 379, 401, and 416. Residues 382-402 show a composition bias toward basic and acidic residues; the sequence is KWSKGDKLSDPCSSRWDERSL. Residues 403–421 show a composition bias toward polar residues; that stretch reads SQRSRSWSYNGYYSDLSTA. The span at 425–460 shows a compositional bias: basic residues; sequence DGHHKKHRKEKKFKHKKKAKKQKHCRRHRQTKKRRI. Residues 514-531 show a composition bias toward basic and acidic residues; sequence SSRDSYRSKSHSRSDSRG. Composition is skewed to low complexity over residues 532-546 and 554-565; these read SSRS…SRSL and SSRSGPRRTSIS. Glycyl lysine isopeptide (Lys-Gly) (interchain with G-Cter in SUMO2) cross-links involve residues lysine 576 and lysine 579. Phosphoserine is present on serine 611. Lysine 637 participates in a covalent cross-link: Glycyl lysine isopeptide (Lys-Gly) (interchain with G-Cter in SUMO2). Serine 646 is subject to Phosphoserine. The span at 651–661 shows a compositional bias: polar residues; that stretch reads TNIKATVSSSS. Positions 651–1453 are disordered; the sequence is TNIKATVSSS…RSPSESSRYS (803 aa). Glycyl lysine isopeptide (Lys-Gly) (interchain with G-Cter in SUMO2) cross-links involve residues lysine 654 and lysine 664. 2 stretches are compositionally biased toward low complexity: residues 682 to 726 and 736 to 749; these read RSSG…SSRS and SQHS…SVSS. Residues 755-772 are compositionally biased toward basic residues; that stretch reads AMFRSNRKKSVTSHKRHR. Basic and acidic residues predominate over residues 773 to 789; the sequence is SNSEKTLHSKYVRGREK. The segment covering 799–809 has biased composition (low complexity); it reads SRSSLDYSSDS. 2 stretches are compositionally biased toward basic and acidic residues: residues 820-852 and 859-868; these read PEKE…ECPR and KDHSRDDSVS. Residues serine 880, serine 882, serine 884, and serine 900 each carry the phosphoserine modification. The span at 887–902 shows a compositional bias: basic and acidic residues; sequence DVTKSRKSDPRRGSEK. Residues 903-913 are compositionally biased toward acidic residues; the sequence is EEGEASSDSES. The segment covering 948-958 has biased composition (low complexity); sequence SSASESESSCS. Positions 966-982 are enriched in basic and acidic residues; the sequence is EPQKQKHSKDDLKGDHT. Over residues 983 to 1005 the composition is skewed to basic residues; it reads KRAREKSKAKKDKKHKAPKRKQA. The span at 1030-1045 shows a compositional bias: basic and acidic residues; sequence DPKEKRHVSEKCEAVK. Phosphoserine is present on residues serine 1139 and serine 1148. The segment covering 1170–1180 has biased composition (polar residues); that stretch reads QESSMSESKTL. Low complexity predominate over residues 1189-1199; that stretch reads SSTSVTSPVET. Serine 1195 carries the post-translational modification Phosphoserine. Residues lysine 1208 and lysine 1249 each participate in a glycyl lysine isopeptide (Lys-Gly) (interchain with G-Cter in SUMO2) cross-link. Positions 1303–1453 are arg/Ser tandem repeat-rich; it reads RSPHRSRSKS…RSPSESSRYS (151 aa). Residues 1322-1346 show a composition bias toward low complexity; that stretch reads SVSYSHSRSRSRSSTSSYRSRSYSR. The span at 1369–1379 shows a compositional bias: basic residues; the sequence is HSHRTSSRSRS. Positions 1380–1401 are enriched in low complexity; that stretch reads RSSSYDLHSRSRSYTYDSYYSR. Residues 1416-1426 are compositionally biased toward basic residues; the sequence is RGRSYNRRSRS.

The protein resides in the cell membrane. It catalyses the reaction [protein]-peptidylproline (omega=180) = [protein]-peptidylproline (omega=0). Inhibited by cyclosporin A (CsA). Its function is as follows. PPIase that catalyzes the cis-trans isomerization of proline imidic peptide bonds in oligopeptides and may therefore assist protein folding. Component of a putative tumor-recognition complex involved in the function of NK cells. This Mus musculus (Mouse) protein is NK-tumor recognition protein.